The following is a 332-amino-acid chain: MATLKDQLIQNLLKEEHVPQNKITIVGVGAVGMACAISILMKDLADEVALVDVMEDKLKGEMMDLQHGSLFLRTPKIVSGKDYNVTANSRLVIITAGARQQEGESRLNLVQRNVNIFKFIIPNIVKYSPNCKLLVVSNPVDILTYVAWKISGFPKNRVIGSGCNLDSARFRYLMGERLGVHPLSCHGWILGEHGDSSVPVWSGVNVAGVSLKNLHPELGTDADKEQWKAVHKQVVDSAYEVIKLKGYTSWAIGLSVADLAESIMKNLRRVHPISTMIKGLYGIKEDVFLSVPCILGQNGISDVVKVTLTHEEEACLKKSADTLWGIQKELQF.

Ala-2 is modified (N-acetylalanine). Lys-5 is subject to N6-acetyllysine; alternate. Position 5 is an N6-succinyllysine; alternate (Lys-5). Position 14 is an N6-acetyllysine (Lys-14). Residue 29–57 coordinates NAD(+); it reads GAVGMACAISILMKDLADEVALVDVMEDK. N6-acetyllysine; alternate is present on Lys-57. A Glycyl lysine isopeptide (Lys-Gly) (interchain with G-Cter in SUMO2); alternate cross-link involves residue Lys-57. Lys-81 bears the N6-acetyllysine mark. Arg-106 serves as a coordination point for substrate. N6-acetyllysine; alternate is present on Lys-118. Lys-118 is modified (N6-succinyllysine; alternate). Position 126 is an N6-acetyllysine (Lys-126). Asn-138 contacts NAD(+). Substrate is bound by residues Asn-138 and Arg-169. Catalysis depends on His-193, which acts as the Proton acceptor. Residues Lys-224 and Lys-232 each carry the N6-acetyllysine modification. At Tyr-239 the chain carries Phosphotyrosine. An N6-acetyllysine modification is found at Lys-243. Residue Thr-248 coordinates substrate. Thr-309 is modified (phosphothreonine). Lys-318 bears the N6-acetyllysine; alternate mark. Lys-318 bears the N6-succinyllysine; alternate mark. Residue Thr-322 is modified to Phosphothreonine.

Belongs to the LDH/MDH superfamily. LDH family. In terms of assembly, homotetramer. Interacts with PTEN upstream reading frame protein MP31. ISGylated.

The protein localises to the cytoplasm. The catalysed reaction is (S)-lactate + NAD(+) = pyruvate + NADH + H(+). The protein operates within fermentation; pyruvate fermentation to lactate; (S)-lactate from pyruvate: step 1/1. Its function is as follows. Interconverts simultaneously and stereospecifically pyruvate and lactate with concomitant interconversion of NADH and NAD(+). The protein is L-lactate dehydrogenase A chain (LDHA) of Bos taurus (Bovine).